A 456-amino-acid polypeptide reads, in one-letter code: UDP-N-acetylmuramate--L-alanine ligase (456 aa).

112-118 (GAHGKTT) provides a ligand contact to ATP.

This sequence belongs to the MurCDEF family.

It localises to the cytoplasm. It carries out the reaction UDP-N-acetyl-alpha-D-muramate + L-alanine + ATP = UDP-N-acetyl-alpha-D-muramoyl-L-alanine + ADP + phosphate + H(+). The protein operates within cell wall biogenesis; peptidoglycan biosynthesis. Functionally, cell wall formation. The chain is UDP-N-acetylmuramate--L-alanine ligase from Desulfatibacillum aliphaticivorans.